We begin with the raw amino-acid sequence, 147 residues long: MSQTRDLQGGKAFGLLKAQQEERLDEINKQFLDDPKYSSDEDLPSKLEGFKEKYMEFDLNGNGDIDIMSLKRMLEKLGVPKTHLELKKLIGEVSSGSGETFSYPDFLRMMLGKRSAILKMILMYEEKAREKEKPTGPPAKKAISELP.

Residue Ser-2 is modified to N-acetylserine. Lys-11 is modified (N6-acetyllysine). At Ser-39 the chain carries Phosphoserine. The EF-hand 1 domain maps to 45–80; sequence SKLEGFKEKYMEFDLNGNGDIDIMSLKRMLEKLGVP. Residues Asp-58, Asn-60, Asn-62, Asp-64, Thr-100, and Asp-105 each contribute to the Ca(2+) site. The EF-hand 2; degenerate domain maps to 81 to 115; sequence KTHLELKKLIGEVSSGSGETFSYPDFLRMMLGKRS. The disordered stretch occupies residues 128–147; the sequence is AREKEKPTGPPAKKAISELP.

Homodimer (Potential). Monomer. Interacts with LCP1. Post-translationally, phosphorylated on serine residues. In terms of tissue distribution, detected in T-lymphocytes and peripheral blood mononuclear cells.

The protein resides in the cytoplasm. The protein localises to the cytoskeleton. It localises to the cell projection. Its subcellular location is the ruffle membrane. It is found in the phagocytic cup. Actin-binding protein that enhances membrane ruffling and RAC activation. Enhances the actin-bundling activity of LCP1. Binds calcium. Plays a role in RAC signaling and in phagocytosis. May play a role in macrophage activation and function. Promotes the proliferation of vascular smooth muscle cells and of T-lymphocytes. Enhances lymphocyte migration. Plays a role in vascular inflammation. This Homo sapiens (Human) protein is Allograft inflammatory factor 1 (AIF1).